The chain runs to 248 residues: Uridylate kinase (248 aa).

15–18 (KLSG) contributes to the ATP binding site. Residues 23–28 (GAEGFG) are involved in allosteric activation by GTP. G57 contacts UMP. Positions 58 and 62 each coordinate ATP. Residues D77 and 138 to 145 (TGNPFFTT) contribute to the UMP site. 3 residues coordinate ATP: T165, Y171, and D174.

This sequence belongs to the UMP kinase family. As to quaternary structure, homohexamer.

Its subcellular location is the cytoplasm. The enzyme catalyses UMP + ATP = UDP + ADP. It participates in pyrimidine metabolism; CTP biosynthesis via de novo pathway; UDP from UMP (UMPK route): step 1/1. Its activity is regulated as follows. Allosterically activated by GTP. Inhibited by UTP. Functionally, catalyzes the reversible phosphorylation of UMP to UDP. This Yersinia enterocolitica serotype O:8 / biotype 1B (strain NCTC 13174 / 8081) protein is Uridylate kinase.